The primary structure comprises 765 residues: Probable exo-1,4-beta-xylosidase bxlB (765 aa).

The signal sequence occupies residues Met1–Ala25. Residues Asn67 and Asn107 are each glycosylated (N-linked (GlcNAc...) asparagine). Asp293 is an active-site residue. 5 N-linked (GlcNAc...) asparagine glycosylation sites follow: Asn345, Asn412, Asn423, Asn464, and Asn761.

Belongs to the glycosyl hydrolase 3 family.

It is found in the secreted. It carries out the reaction Hydrolysis of (1-&gt;4)-beta-D-xylans, to remove successive D-xylose residues from the non-reducing termini.. Its pathway is glycan degradation; xylan degradation. Xylan 1,4-beta-xylosidase involved in the hydrolysis of xylan, a major structural heterogeneous polysaccharide found in plant biomass representing the second most abundant polysaccharide in the biosphere, after cellulose. The chain is Probable exo-1,4-beta-xylosidase bxlB (bxlB) from Aspergillus terreus (strain NIH 2624 / FGSC A1156).